The primary structure comprises 82 residues: Translational regulator CsrA (82 aa).

Belongs to the CsrA/RsmA family. In terms of assembly, homodimer; the beta-strands of each monomer intercalate to form a hydrophobic core, while the alpha-helices form wings that extend away from the core.

The protein resides in the cytoplasm. Functionally, a translational regulator that binds mRNA to regulate translation initiation and/or mRNA stability. Usually binds in the 5'-UTR at or near the Shine-Dalgarno sequence preventing ribosome-binding, thus repressing translation. Its main target seems to be the major flagellin gene, while its function is anatagonized by FliW. This is Translational regulator CsrA from Geobacillus sp. (strain WCH70).